A 160-amino-acid polypeptide reads, in one-letter code: 3-dehydroquinate dehydratase (160 aa).

Residue tyrosine 22 is the Proton acceptor of the active site. 3 residues coordinate substrate: asparagine 73, histidine 79, and aspartate 86. The Proton donor role is filled by histidine 99. Residues 100 to 101 (IS) and arginine 110 contribute to the substrate site.

Belongs to the type-II 3-dehydroquinase family. As to quaternary structure, homododecamer.

The enzyme catalyses 3-dehydroquinate = 3-dehydroshikimate + H2O. Its pathway is metabolic intermediate biosynthesis; chorismate biosynthesis; chorismate from D-erythrose 4-phosphate and phosphoenolpyruvate: step 3/7. In terms of biological role, catalyzes a trans-dehydration via an enolate intermediate. The polypeptide is 3-dehydroquinate dehydratase (Campylobacter lari (strain RM2100 / D67 / ATCC BAA-1060)).